Consider the following 1186-residue polypeptide: MNFSKNQRAVIAHIPDHNLLVAASAGSGKTTVLIEHVYQQLLSGKSIDRFLISTFTDAAALEMKNRLEKRIRAGITEEEGQLKRHLQEQLLLLNSAAIGTLDSFSLRIIERYYSVIGLDPRYRMLADQTEKNLLVKDVLDDTFDEMYHDEKFLRLLNNFSSASHDQDLKNLVIKLNTMAETRANPDFWLDSIAENYRLSGGLTKGSFWKELLQPQIFNRASAALYQLLSAKKGVEDLEDYHSYIAYLADAVGLVRGFIEVCSQNNWQQMSDYFVNNSWPKSARKSGKNEQEADYFDNWIKPWIKEAKDSYRSIESDFLFLNESQWLDISEKSLGVVEELIRLTKVFRKKFALKKRELSLLDFSDGEQFAYQILQNQTVREEIQSLFDEVLVDEYQDINDLQENILTDVSNGSNFFMVGDLKQSIYGFRQADPVNFSNKYIQYKEGNGGELIELSENYRSQHNVADFTNAVFRKLMDRKLGGIDYRGDVELKAANRDYPKNLKNVADISIFDIDEESNEDEDFNSRQAQIEIIAAKIQALVGQSEIYDRQSGKMRPLVYRDITILERSHSWENDIQTIFKKYHIPINVAAGNFLQEFEVSIVLSFLKIIDNPHQDIPLVAVLRSPIYGLDENQLAEIRTADMKHDYFSALQAYAKTGQDLDLQKKMAAFLVQLENYREIAADNQIVDLIWQIYNDTNWPEYVAGMVGGSQRQANLHALYQYAQQLSDNHFVGLFSFIRYVEQLMDSVEDFAQAPVDMGQEAVSVMTIHAAKGLEFPIVFLLNLDKQIDNRDSNGAMVVDFDNGIGIDFVHPTSQVKIPTIQKIAVAEKIKEKNWAEEMRLLYVALTRAEQRLYLVGSSKRMSDLIHNWGTPVSIGKKVIAFQDRMRAKSYQSWIGMSLANSGYIKLDKVEGNYSKKDLTFKIESYNAQTIPKIVENKAKIKQNEQEETGIDLARSKKILDYNYPYKIESELAAYHNVSELKRVFEDPDSLLMPEMNSDRQPQITELPEPKFIGGNDQEQVSSTDKGTATHLILEKIDWKKEIDKDYLQQLIKENIPDQKTRQSIELDRIIWFANSEFGTEIKKSASTLKREQTFAMLIPAKQIYQQVETSDPVLVHGIIDGYFISDGLITLFDYKTDRFGKDYVSKLKERYSGQLNLYAAALSSIYPNLKVERKVVVGLQGKRLIYL.

Positions 2–460 (NFSKNQRAVI…IELSENYRSQ (459 aa)) constitute a UvrD-like helicase ATP-binding domain. 23–30 (ASAGSGKT) is a binding site for ATP. The UvrD-like helicase C-terminal domain occupies 487 to 771 (DVELKAANRD…SVMTIHAAKG (285 aa)).

It belongs to the helicase family. AddA subfamily. In terms of assembly, heterodimer of AddA and AddB/RexB. Mg(2+) serves as cofactor.

The enzyme catalyses Couples ATP hydrolysis with the unwinding of duplex DNA by translocating in the 3'-5' direction.. The catalysed reaction is ATP + H2O = ADP + phosphate + H(+). Its function is as follows. The heterodimer acts as both an ATP-dependent DNA helicase and an ATP-dependent, dual-direction single-stranded exonuclease. Recognizes the chi site generating a DNA molecule suitable for the initiation of homologous recombination. The AddA nuclease domain is required for chi fragment generation; this subunit has the helicase and 3' -&gt; 5' nuclease activities. The chain is ATP-dependent helicase/nuclease subunit A from Oenococcus oeni (strain ATCC BAA-331 / PSU-1).